Consider the following 530-residue polypeptide: MASYQSINFRREAILSGRPYPYYYPYVSQIPCISNSCEDHRIQADPNIIYSYEGTQAFDWSNGQCHDPTHNRSTCISNVYYPTNPIFDYCYYGETPFQDPSYQLGFIVREIVVNIIDVPDLRDPVEYMETMAPIGNSESLQINFVLNNQNKLSENNQSNPQINSQINPQMNPRINSQINTQRDNLQPEIYTNNDEPTLSAPVKSVLYKDPIDRIRKVTNCPQVTQDPGLIEPRNLIIVCDTIWVCTPGFLRAYNLLGVPTGRKIGTFGIGGNNVYPSSIAYNDNQCLFPIQKGSKCASSTMIIATLDGTINAYNPIINPENSILVIDNSSRQAMYTGVAICGCRVYLTDFYNQQIDVYDDKFILLPEFSFVGDDECDPIPEYFSPYNIVNICDQLYVTFVQQDPYNNTLEFDGTGLGYINIYTPDGIFIRRFASGCVLNVPYGLIEAPSCYGYPSGSILVANYGSGNINVFDIHGKWISNLKDGFGTDLYIEGLRGITHASCCPKTVYWTSCVNHKINKLGTINTSTNNC.

This sequence belongs to the mimivirus R640 family.

This is an uncharacterized protein from Acanthamoeba polyphaga (Amoeba).